Consider the following 205-residue polypeptide: Nascent polypeptide-associated complex subunit alpha-like protein (205 aa).

Disordered stretches follow at residues Met1–Met73 and Lys137–Val166. Over residues Glu20 to Glu29 the composition is skewed to basic and acidic residues. Positions Pro30 to Gln51 are enriched in acidic residues. Residues Gly56–Glu66 are compositionally biased toward basic and acidic residues. The NAC-A/B domain occupies Ser63–Leu128. Acidic residues predominate over residues Gln155 to Gly165. The region spanning Val166–Leu203 is the UBA domain.

Belongs to the NAC-alpha family.

Functionally, may promote appropriate targeting of ribosome-nascent polypeptide complexes. This Pinus taeda (Loblolly pine) protein is Nascent polypeptide-associated complex subunit alpha-like protein.